A 449-amino-acid polypeptide reads, in one-letter code: NADH-quinone oxidoreductase subunit F (449 aa).

Residue 67–76 (GRGGAGFPTG) participates in NAD(+) binding. 179–226 (GAGAYICGEETALLDSLEGRRGQPRLRPPFPAVAGLYACPTVVNNVES) is a binding site for FMN. Cysteine 355, cysteine 358, cysteine 361, and cysteine 401 together coordinate [4Fe-4S] cluster.

This sequence belongs to the complex I 51 kDa subunit family. FMN serves as cofactor. It depends on [4Fe-4S] cluster as a cofactor.

It catalyses the reaction a quinone + NADH + 5 H(+)(in) = a quinol + NAD(+) + 4 H(+)(out). Functionally, NDH-1 shuttles electrons from NADH, via FMN and iron-sulfur (Fe-S) centers, to quinones in the respiratory chain. Couples the redox reaction to proton translocation (for every two electrons transferred, four hydrogen ions are translocated across the cytoplasmic membrane), and thus conserves the redox energy in a proton gradient. The protein is NADH-quinone oxidoreductase subunit F (nuoF) of Streptomyces coelicolor (strain ATCC BAA-471 / A3(2) / M145).